Here is a 252-residue protein sequence, read N- to C-terminus: 3-dehydroquinate dehydratase (252 aa).

3-dehydroquinate-binding positions include serine 21, 46–48 (EWR), and arginine 82. Catalysis depends on histidine 143, which acts as the Proton donor/acceptor. The active-site Schiff-base intermediate with substrate is the lysine 170. 3-dehydroquinate-binding residues include arginine 213, serine 232, and glutamine 236.

The protein belongs to the type-I 3-dehydroquinase family. As to quaternary structure, homodimer.

The catalysed reaction is 3-dehydroquinate = 3-dehydroshikimate + H2O. The protein operates within metabolic intermediate biosynthesis; chorismate biosynthesis; chorismate from D-erythrose 4-phosphate and phosphoenolpyruvate: step 3/7. In terms of biological role, involved in the third step of the chorismate pathway, which leads to the biosynthesis of aromatic amino acids. Catalyzes the cis-dehydration of 3-dehydroquinate (DHQ) and introduces the first double bond of the aromatic ring to yield 3-dehydroshikimate. This is 3-dehydroquinate dehydratase from Salmonella paratyphi A (strain ATCC 9150 / SARB42).